The primary structure comprises 157 residues: MIITAIDTNIYDQPEFVEGRDVIGVRFEDLVLDKRIQRVALPGGEELGLRLNHGHPILREGDVLKADDKTVFVVEIIPTDVLVITPSDIHQMGFVAHSLGNRHLPAQFSKPGELTEKAAMIVQYDHTVVSFLDEHGIEYQRTELVPPIPFRHSGHTH.

The protein belongs to the UreE family.

It is found in the cytoplasm. Involved in urease metallocenter assembly. Binds nickel. Probably functions as a nickel donor during metallocenter assembly. This chain is Urease accessory protein UreE, found in Corynebacterium glutamicum (strain ATCC 13032 / DSM 20300 / JCM 1318 / BCRC 11384 / CCUG 27702 / LMG 3730 / NBRC 12168 / NCIMB 10025 / NRRL B-2784 / 534).